The primary structure comprises 402 residues: Multidrug resistance protein MdtH (402 aa).

Residues methionine 1–lysine 12 lie on the Cytoplasmic side of the membrane. The chain crosses the membrane as a helical span at residues tyrosine 13–isoleucine 33. Residues serine 34–glutamate 98 are Periplasmic-facing. The helical transmembrane segment at proline 99–phenylalanine 116 threads the bilayer. Topologically, residues aspartate 117–serine 138 are cytoplasmic. Residues leucine 139 to leucine 159 traverse the membrane as a helical segment. The Periplasmic portion of the chain corresponds to glutamine 160–arginine 164. Residues leucine 165–leucine 185 form a helical membrane-spanning segment. Over proline 186–tyrosine 213 the chain is Cytoplasmic. The chain crosses the membrane as a helical span at residues valine 214–methionine 234. Residues valine 235 to alanine 243 are Periplasmic-facing. The chain crosses the membrane as a helical span at residues alanine 244–alanine 264. At arginine 265 to arginine 276 the chain is on the cytoplasmic side. A helical membrane pass occupies residues leucine 277–leucine 297. The Periplasmic segment spans residues glutamine 298–glutamine 299. Residues leucine 300 to threonine 320 form a helical membrane-spanning segment. At leucine 321–arginine 339 the chain is on the cytoplasmic side. A helical transmembrane segment spans residues leucine 340 to glycine 360. The Periplasmic portion of the chain corresponds to lysine 361–glutamate 367. The chain crosses the membrane as a helical span at residues leucine 368–phenylalanine 388. The Cytoplasmic portion of the chain corresponds to serine 389–alanine 402.

It belongs to the major facilitator superfamily. DHA1 family. MdtH (TC 2.A.1.2.21) subfamily.

The protein resides in the cell inner membrane. This is Multidrug resistance protein MdtH from Salmonella typhimurium (strain LT2 / SGSC1412 / ATCC 700720).